We begin with the raw amino-acid sequence, 641 residues long: Ribosomal oxygenase 1 (641 aa).

Residue M1 is modified to N-acetylmethionine. Disordered regions lie at residues M1 to R35 and R54 to P80. Over residues R12 to Q23 the composition is skewed to basic residues. S60, S63, and S109 each carry phosphoserine. The region spanning C294–A439 is the JmjC domain. The Fe cation site is built by H340, D342, and H405.

The protein belongs to the ROX family. NO66 subfamily. Interacts with SP7/OSX; the interaction is direct. Interacts with MYC. Interacts with PHF19; leading to its recruitment to H3K36me3 sites. Fe(2+) is required as a cofactor. Widely expressed. Overexpressed in lung carcinomas.

Its subcellular location is the nucleus. It localises to the nucleolus. The protein localises to the nucleoplasm. It catalyses the reaction N(6),N(6)-dimethyl-L-lysyl(36)-[histone H3] + 2 2-oxoglutarate + 2 O2 = L-lysyl(36)-[histone H3] + 2 formaldehyde + 2 succinate + 2 CO2. The enzyme catalyses N(6)-methyl-L-lysyl-[protein] + 2-oxoglutarate + O2 = L-lysyl-[protein] + formaldehyde + succinate + CO2. It carries out the reaction L-histidyl-[protein] + 2-oxoglutarate + O2 = (3S)-3-hydroxy-L-histidyl-[protein] + succinate + CO2. Functionally, oxygenase that can act as both a histone lysine demethylase and a ribosomal histidine hydroxylase. Specifically demethylates 'Lys-4' (H3K4me) and 'Lys-36' (H3K36me) of histone H3, thereby playing a central role in histone code. Preferentially demethylates trimethylated H3 'Lys-4' (H3K4me3) and monomethylated H3 'Lys-4' (H3K4me1) residues, while it has weaker activity for dimethylated H3 'Lys-36' (H3K36me2). Acts as a regulator of osteoblast differentiation via its interaction with SP7/OSX by demethylating H3K4me and H3K36me, thereby inhibiting SP7/OSX-mediated promoter activation. Also catalyzes demethylation of non-histone proteins, such as CGAS: demethylation of monomethylated CGAS promotes interaction between CGAS and PARP1, followed by PARP1 inactivation. Also catalyzes the hydroxylation of 60S ribosomal protein L8 on 'His-216', thereby playing a role in ribosome biogenesis. Participates in MYC-induced transcriptional activation. This chain is Ribosomal oxygenase 1, found in Homo sapiens (Human).